The following is a 615-amino-acid chain: Kelch-like protein 26 (615 aa).

A compositionally biased stretch (gly residues) spans 1 to 21; sequence MAESGGSSGGAGGGGAFGAGP. The interval 1 to 35 is disordered; it reads MAESGGSSGGAGGGGAFGAGPGPERPNSTADKNGA. Position 2 is an N-acetylalanine (A2). A BTB domain is found at 63–130; the sequence is LDVVLTINRE…AYSAEVTLDL (68 aa). The BACK domain occupies 165-266; sequence CLNIGQMATT…QSSELVDSVQ (102 aa). 6 Kelch repeats span residues 310-361, 362-413, 414-460, 461-508, 510-559, and 561-608; these read SLVT…VLDN, FVYV…VLCG, MVYA…ASGG, RLYI…GAGG, IYAL…LLER, and IYIV…PVLL.

In terms of biological role, may play a role in endo(sarco)plasmic reticulum (ER/SR) mitochondrial signaling. May be part of the ubiquitin-proteasome system (UPS) and affect ubiquitination and degradation of target substrates in cardiomyocytes. The chain is Kelch-like protein 26 (KLHL26) from Homo sapiens (Human).